The following is a 259-amino-acid chain: Caffeoyl-CoA O-methyltransferase (259 aa).

Lysine 33 serves as a coordination point for substrate. Residues threonine 75, glutamate 97, glycine 99–valine 100, serine 105, aspartate 123, and alanine 152 contribute to the S-adenosyl-L-methionine site. Aspartate 175 contacts substrate. Residue aspartate 175 coordinates a divalent metal cation. Position 177 (aspartate 177) interacts with S-adenosyl-L-methionine. Residues aspartate 201 and asparagine 202 each coordinate a divalent metal cation. Asparagine 206 contacts substrate.

This sequence belongs to the class I-like SAM-binding methyltransferase superfamily. Cation-dependent O-methyltransferase family. CCoAMT subfamily. The cofactor is a divalent metal cation.

It carries out the reaction (E)-caffeoyl-CoA + S-adenosyl-L-methionine = (E)-feruloyl-CoA + S-adenosyl-L-homocysteine + H(+). Its pathway is aromatic compound metabolism; phenylpropanoid biosynthesis. In terms of biological role, methylates caffeoyl-CoA to feruloyl-CoA and 5-hydroxyferuloyl-CoA to sinapoyl-CoA. Plays a role in the synthesis of feruloylated polysaccharides. Involved in the reinforcement of the plant cell wall. Also involved in the responding to wounding or pathogen challenge by the increased formation of cell wall-bound ferulic acid polymers. The polypeptide is Caffeoyl-CoA O-methyltransferase (CCOAOMT) (Pinus taeda (Loblolly pine)).